The sequence spans 444 residues: tRNA-2-methylthio-N(6)-dimethylallyladenosine synthase (444 aa).

Residues 2-119 form the MTTase N-terminal domain; sequence KKVYIKTFGC…LPDLIESRKQ (118 aa). Residues C11, C48, C82, C156, C160, and C163 each contribute to the [4Fe-4S] cluster site. The Radical SAM core domain maps to 142–374; that stretch reads KVDGGAAFVS…NEVIEAKGYA (233 aa). Residues 377 to 440 form the TRAM domain; the sequence is QSMVGTVQRV…PHSLAGEALT (64 aa).

It belongs to the methylthiotransferase family. MiaB subfamily. As to quaternary structure, monomer. It depends on [4Fe-4S] cluster as a cofactor.

The protein resides in the cytoplasm. The catalysed reaction is N(6)-dimethylallyladenosine(37) in tRNA + (sulfur carrier)-SH + AH2 + 2 S-adenosyl-L-methionine = 2-methylsulfanyl-N(6)-dimethylallyladenosine(37) in tRNA + (sulfur carrier)-H + 5'-deoxyadenosine + L-methionine + A + S-adenosyl-L-homocysteine + 2 H(+). Its function is as follows. Catalyzes the methylthiolation of N6-(dimethylallyl)adenosine (i(6)A), leading to the formation of 2-methylthio-N6-(dimethylallyl)adenosine (ms(2)i(6)A) at position 37 in tRNAs that read codons beginning with uridine. The polypeptide is tRNA-2-methylthio-N(6)-dimethylallyladenosine synthase (Chromobacterium violaceum (strain ATCC 12472 / DSM 30191 / JCM 1249 / CCUG 213 / NBRC 12614 / NCIMB 9131 / NCTC 9757 / MK)).